The primary structure comprises 201 residues: Holliday junction branch migration complex subunit RuvA (201 aa).

A domain I region spans residues 1–63 (MIEFVRGYVD…EDTLALYGFR (63 aa)). The segment at 64–142 (TREERTLFAK…AVTAKTFPDL (79 aa)) is domain II. The interval 143-153 (FHLQEESARPH) is flexible linker. The domain III stretch occupies residues 153–201 (HLSALEEAIEALKALGYAEREIQKVVPSLMKENLSTDQYVKRALQQLLK).

This sequence belongs to the RuvA family. Homotetramer. Forms an RuvA(8)-RuvB(12)-Holliday junction (HJ) complex. HJ DNA is sandwiched between 2 RuvA tetramers; dsDNA enters through RuvA and exits via RuvB. An RuvB hexamer assembles on each DNA strand where it exits the tetramer. Each RuvB hexamer is contacted by two RuvA subunits (via domain III) on 2 adjacent RuvB subunits; this complex drives branch migration. In the full resolvosome a probable DNA-RuvA(4)-RuvB(12)-RuvC(2) complex forms which resolves the HJ.

The protein resides in the cytoplasm. Functionally, the RuvA-RuvB-RuvC complex processes Holliday junction (HJ) DNA during genetic recombination and DNA repair, while the RuvA-RuvB complex plays an important role in the rescue of blocked DNA replication forks via replication fork reversal (RFR). RuvA specifically binds to HJ cruciform DNA, conferring on it an open structure. The RuvB hexamer acts as an ATP-dependent pump, pulling dsDNA into and through the RuvAB complex. HJ branch migration allows RuvC to scan DNA until it finds its consensus sequence, where it cleaves and resolves the cruciform DNA. The protein is Holliday junction branch migration complex subunit RuvA of Geobacillus sp. (strain WCH70).